A 201-amino-acid chain; its full sequence is Protease (201 aa).

Residues His-55, Asp-72, and Cys-122 contribute to the active site.

This sequence belongs to the peptidase C5 family. In terms of assembly, interacts with protease cofactor pVI-C; this interaction is necessary for protease activation.

It is found in the virion. The protein localises to the host nucleus. It catalyses the reaction Cleaves proteins of the adenovirus and its host cell at two consensus sites: -Yaa-Xaa-Gly-Gly-|-Xaa- and -Yaa-Xaa-Gly-Xaa-|-Gly- (in which Yaa is Met, Ile or Leu, and Xaa is any amino acid).. With respect to regulation, requires DNA and protease cofactor for maximal activation. Inside nascent virions, becomes partially activated by binding to the viral DNA, allowing it to cleave the cofactor that binds to the protease and fully activates it. Actin, like the viral protease cofactor, seems to act as a cofactor in the cleavage of cytokeratin 18 and of actin itself. In terms of biological role, cleaves viral precursor proteins (pTP, pIIIa, pVI, pVII, pVIII, and pX) inside newly assembled particles giving rise to mature virions. Protease complexed to its cofactor slides along the viral DNA to specifically locate and cleave the viral precursors. Mature virions have a weakened organization compared to the unmature virions, thereby facilitating subsequent uncoating. Without maturation, the particle lacks infectivity and is unable to uncoat. Late in adenovirus infection, in the cytoplasm, may participate in the cytoskeleton destruction. Cleaves host cell cytoskeletal keratins K7 and K18. The sequence is that of Protease from Bovine adenovirus 4 (BAdV-4).